We begin with the raw amino-acid sequence, 306 residues long: Methylated RNA-binding protein 1 (306 aa).

A YTH domain is found at 155–290 (SRFFVIKSSS…SIGISIINLF (136 aa)). RNA is bound by residues 161–163 (KSS), Asn207, and Trp231.

In terms of biological role, RNA-binding protein that acts as a post-transcriptional regulator of phosphate metabolism by binding to the 3'-UTR region of PHO4 mRNA, decreasing its stability. Acts by recognizing and binding N6-methyladenosine (m6A)-containing RNAs, a modification present at internal sites of mRNAs and some non-coding RNAs. The chain is Methylated RNA-binding protein 1 from Saccharomyces cerevisiae (strain ATCC 204508 / S288c) (Baker's yeast).